The following is a 372-amino-acid chain: Probable basic-leucine zipper transcription factor G (372 aa).

2 disordered regions span residues 1–20 (MLSV…QQQQ) and 176–234 (TTNN…EKFE). Composition is skewed to low complexity over residues 11 to 20 (QQPQQQQQQQ) and 176 to 215 (TTNN…KSNT). Polar residues predominate over residues 223–234 (IRNSNSTFEKFE). The 64-residue stretch at 277 to 340 (ELKRQKRLIK…LILKAEVGQL (64 aa)) folds into the bZIP domain. The interval 279-301 (KRQKRLIKNRESAHLSRQRKRER) is basic motif. The interval 305–340 (LEHRVEELSSNSIDINKTLSSLENENLILKAEVGQL) is leucine-zipper.

The protein belongs to the bZIP family.

It localises to the nucleus. In terms of biological role, probable transcriptional regulator. This chain is Probable basic-leucine zipper transcription factor G (bzpG), found in Dictyostelium discoideum (Social amoeba).